A 168-amino-acid polypeptide reads, in one-letter code: Pleiotrophin (168 aa).

The signal sequence occupies residues 1 to 32 (MQTPQFLQQRRKFAAAFLAFIFLLAVVDTAEA). 5 disulfide bridges follow: Cys47/Cys76, Cys55/Cys85, Cys62/Cys89, Cys99/Cys131, and Cys109/Cys141. 2 chondroitin sulfate binding regions span residues 92 to 99 (KKQFGAEC) and 123 to 131 (KRALHNADC). The disordered stretch occupies residues 139–168 (KPCGKVTKPKPQAESKKKKKEGKKQEKMLD). Residues 147–168 (PKPQAESKKKKKEGKKQEKMLD) are chondroitin sulfate A binding.

The protein belongs to the pleiotrophin family. Interacts with ALK and NEK6. Interacts with PTPRZ1 (via chondroitin sulfate groups); promotes formation of homooligomers; oligomerization impairs tyrosine phosphatase activity. Forms a complex with PTPRZ1 and CTNNB1; this complex inactivates PTPRZ1 protein tyrosine phosphatase activity through PTN interaction and stimulates tyrosine phosphorylation of CTNNB1. Interacts with ITGB3 and ITGA5. Forms a complex with PTPRZ1 and integrin alpha-V/beta-3 (ITGAV:ITGB3) that stimulates endothelial cell migration through ITGB3 'Tyr-773' phosphorylation. Interacts with SDC3 (via heparan sulfate chains); this interaction mediates the neurite outgrowth-promoting signal from PTN to the cytoskeleton of growing neurites; this interaction mediates osteoblast recruitment. Interacts with GPC2 (via heparan sulfate); this interaction promotes neurite outgrowth through binding of PTN with chondroitin sulfate of proteoglycans, thereby releasing PTPRS of chondroitin sulfate proteoglycans (CSPGs) and leading to binding with heparan sulfate of GPC2. In terms of processing, phosphorylated by NEK6.

The protein localises to the secreted. Its function is as follows. Secreted growth factor that mediates its signal through cell-surface proteoglycan and non-proteoglycan receptors. Binds cell-surface proteoglycan receptor via their chondroitin sulfate (CS) groups. Thereby regulates many processes like cell proliferation, cell survival, cell growth, cell differentiation and cell migration in several tissues namely neuron and bone. Also plays a role in synaptic plasticity and learning-related behavior by inhibiting long-term synaptic potentiation. Binds PTPRZ1, leading to neutralization of the negative charges of the CS chains of PTPRZ1, inducing PTPRZ1 clustering, thereby causing the dimerization and inactivation of its phosphatase activity leading to increased tyrosine phosphorylation of each of the PTPRZ1 substrates like ALK, CTNNB1 or AFAP1L2 in order to activate the PI3K-AKT pathway. Through PTPRZ1 binding controls oligodendrocyte precursor cell differentiation by enhancing the phosphorylation of AFAP1L2 in order to activate the PI3K-AKT pathway. Forms a complex with PTPRZ1 and integrin alpha-V/beta-3 (ITGAV:ITGB3) that stimulates endothelial cell migration through SRC dephosphorylation and activation that consequently leads to ITGB3 'Tyr-773' phosphorylation. In adult hippocampus promotes dendritic arborization, spine development, and functional integration and connectivity of newborn granule neurons through ALK by activating AKT signaling pathway. Binds GPC2 and chondroitin sulfate proteoglycans (CSPGs) at the neuron surface, leading to abrogation of binding between PTPRS and CSPGs and neurite outgrowth promotion. Binds SDC3 and mediates bone formation by recruiting and attaching osteoblasts/osteoblast precursors to the sites for new bone deposition. Binds ALK and promotes cell survival and cell proliferation through MAPK pathway activation. Inhibits proliferation and enhances differentiation of neural stem cells by inhibiting FGF2-induced fibroblast growth factor receptor signaling pathway. Mediates regulatory mechanisms in normal hemostasis and in hematopoietic regeneration and in maintaining the balance of myeloid and lymphoid regeneration. In addition may play a role in the female reproductive system, auditory response and the progesterone-induced decidualization pathway. This Sus scrofa (Pig) protein is Pleiotrophin.